The sequence spans 65 residues: Large ribosomal subunit protein bL35 (65 aa).

This sequence belongs to the bacterial ribosomal protein bL35 family.

This is Large ribosomal subunit protein bL35 from Paraburkholderia xenovorans (strain LB400).